Consider the following 428-residue polypeptide: MTMKVKLLTTSVALALSMTAFSSNAVDFSGYFRSGVGVSQDGDMQTGNQSLVGRLGNESDTYTEIGIGQEVYNKDGKVFYVDSMFSMQSNGSNDYESTATVCDFDKKQCSEDATFALRQFNVKAKGLISAAPDAVVWAGKRFYQRHDLHIIDTKYWNISGAGAGIENLKAGPGAFSLAWIRSDGNDIDNSIVDNDLNVNFLDLRYAGWAPWEGAWTEAGVSYAMPNPTDEQKATGGKYDPENGVMLTAEMSQYFAGSGINEKLVLQYANKGLAQNMISQGGGWYDVWQLTDDAKGYRVILTGDIPLGDKFSVNHVFTYGKGEKLQEWHDNTELFSAVARGGYAWTDIMKTLVEAGTYESTKTWTSGAEDKSSGQKYTLAQAWSAGPSMFARPEIRVFASYLKDGEGESFNGGEDDSTWNFGVQAEAWW.

Positions 1–25 (MTMKVKLLTTSVALALSMTAFSSNA) are cleaved as a signal peptide.

The protein belongs to the porin LamB (TC 1.B.3) family. Homotrimer formed of three 18-stranded antiparallel beta-barrels, containing three independent channels.

The protein resides in the cell outer membrane. The catalysed reaction is beta-maltose(in) = beta-maltose(out). Involved in the transport of maltose and maltodextrins. This is Maltoporin 1 from Aeromonas salmonicida (strain A449).